Consider the following 501-residue polypeptide: Lysine--tRNA ligase (501 aa).

The Mg(2+) site is built by Glu411 and Glu418.

This sequence belongs to the class-II aminoacyl-tRNA synthetase family. In terms of assembly, homodimer. Mg(2+) is required as a cofactor.

It localises to the cytoplasm. The enzyme catalyses tRNA(Lys) + L-lysine + ATP = L-lysyl-tRNA(Lys) + AMP + diphosphate. The protein is Lysine--tRNA ligase of Magnetococcus marinus (strain ATCC BAA-1437 / JCM 17883 / MC-1).